The primary structure comprises 1206 residues: DNA polymerase (1206 aa).

It belongs to the DNA polymerase type-B family.

It carries out the reaction DNA(n) + a 2'-deoxyribonucleoside 5'-triphosphate = DNA(n+1) + diphosphate. This Pyramimonas orientalis virus (PoV01) protein is DNA polymerase (dpo).